The sequence spans 194 residues: Leucyl/phenylalanyl-tRNA--protein transferase (194 aa).

It belongs to the L/F-transferase family.

Its subcellular location is the cytoplasm. The enzyme catalyses N-terminal L-lysyl-[protein] + L-leucyl-tRNA(Leu) = N-terminal L-leucyl-L-lysyl-[protein] + tRNA(Leu) + H(+). It catalyses the reaction N-terminal L-arginyl-[protein] + L-leucyl-tRNA(Leu) = N-terminal L-leucyl-L-arginyl-[protein] + tRNA(Leu) + H(+). It carries out the reaction L-phenylalanyl-tRNA(Phe) + an N-terminal L-alpha-aminoacyl-[protein] = an N-terminal L-phenylalanyl-L-alpha-aminoacyl-[protein] + tRNA(Phe). Functions in the N-end rule pathway of protein degradation where it conjugates Leu, Phe and, less efficiently, Met from aminoacyl-tRNAs to the N-termini of proteins containing an N-terminal arginine or lysine. This Prosthecochloris aestuarii (strain DSM 271 / SK 413) protein is Leucyl/phenylalanyl-tRNA--protein transferase.